A 142-amino-acid chain; its full sequence is Large ribosomal subunit protein uL13 (142 aa).

It belongs to the universal ribosomal protein uL13 family. As to quaternary structure, part of the 50S ribosomal subunit.

Its function is as follows. This protein is one of the early assembly proteins of the 50S ribosomal subunit, although it is not seen to bind rRNA by itself. It is important during the early stages of 50S assembly. This chain is Large ribosomal subunit protein uL13, found in Pseudoalteromonas atlantica (strain T6c / ATCC BAA-1087).